Consider the following 504-residue polypeptide: Myocilin (504 aa).

A signal peptide spans 1 to 32 (MRFFCARCCSFGPEMPAVQLLLLACLVWDVGA). Residue asparagine 57 is glycosylated (N-linked (GlcNAc...) asparagine). Positions 74–184 (LQRDSSTQRL…QEVARLRRGQ (111 aa)) form a coiled coil. Disordered regions lie at residues 106–131 (QAAR…RDQL) and 170–200 (LESS…PGSR). Residues 122–131 (GTLRRERDQL) are compositionally biased toward basic and acidic residues. The Olfactomedin-like domain maps to 244–503 (GCGELVWVGE…MVTYDIKLSK (260 aa)). An intrachain disulfide couples cysteine 245 to cysteine 433. Aspartate 380, asparagine 428, alanine 429, isoleucine 477, and aspartate 478 together coordinate Ca(2+). Residues 502 to 504 (SKM) carry the Microbody targeting signal motif.

As to quaternary structure, homodimer (via N-terminus). Can also form higher oligomers. Interacts with OLFM3, FN1, NRCAM, GLDN and NFASC. Interacts (via N-terminus) with MYL2. Interacts with SFRP1, FRZB, FZD7, FZD10, FZD1 and WIF1; regulates Wnt signaling. Interacts with SNTA1; regulates muscle hypertrophy. Interacts with ERBB2 and ERBB3; activates ERBB2-ERBB3 signaling pathway. Interacts with SNCG; affects its secretion and its aggregation. In terms of processing, different isoforms may arise by post-translational modifications. Post-translationally, glycosylated. Palmitoylated. In terms of processing, undergoes a calcium-dependent proteolytic cleavage at Arg-226 by CAPN2 in the endoplasmic reticulum. The result is the production of two fragments, one of 35 kDa containing the C-terminal olfactomedin-like domain, and another of 20 kDa containing the N-terminal leucine zipper-like domain. Detected in aqueous humor. Detected in the eye (at protein level). Widely expressed. Highly expressed in various types of muscle, ciliary body, papillary sphincter, skeletal muscle, heart, and bone marrow-derived mesenchymal stem cells. Expressed predominantly in the retina. In normal eyes, found in the inner uveal meshwork region and the anterior portion of the meshwork. In contrast, in many glaucomatous eyes, it is found in more regions of the meshwork and seems to be expressed at higher levels than in normal eyes, regardless of the type or clinical severity of glaucoma. The myocilin 35 kDa fragment is detected in aqueous humor and to a lesser extent in iris and ciliary body.

It is found in the secreted. Its subcellular location is the golgi apparatus. The protein resides in the cytoplasmic vesicle. The protein localises to the extracellular space. It localises to the extracellular matrix. It is found in the extracellular exosome. Its subcellular location is the mitochondrion. The protein resides in the mitochondrion intermembrane space. The protein localises to the mitochondrion inner membrane. It localises to the mitochondrion outer membrane. It is found in the rough endoplasmic reticulum. Its subcellular location is the cell projection. The protein resides in the cilium. The protein localises to the endoplasmic reticulum. Functionally, secreted glycoprotein regulating the activation of different signaling pathways in adjacent cells to control different processes including cell adhesion, cell-matrix adhesion, cytoskeleton organization and cell migration. Promotes substrate adhesion, spreading and formation of focal contacts. Negatively regulates cell-matrix adhesion and stress fiber assembly through Rho protein signal transduction. Modulates the organization of actin cytoskeleton by stimulating the formation of stress fibers through interactions with components of Wnt signaling pathways. Promotes cell migration through activation of PTK2 and the downstream phosphatidylinositol 3-kinase signaling. Plays a role in bone formation and promotes osteoblast differentiation in a dose-dependent manner through mitogen-activated protein kinase signaling. Mediates myelination in the peripheral nervous system through ERBB2/ERBB3 signaling. Plays a role as a regulator of muscle hypertrophy through the components of dystrophin-associated protein complex. Involved in positive regulation of mitochondrial depolarization. Plays a role in neurite outgrowth. May participate in the obstruction of fluid outflow in the trabecular meshwork. In Homo sapiens (Human), this protein is Myocilin (MYOC).